The primary structure comprises 325 residues: Cyclic AMP-responsive element-binding protein 1 (325 aa).

2 stretches are compositionally biased toward polar residues: residues 1–11 (MESGAENQQSG) and 18–27 (AESQQMTVQA). Disordered stretches follow at residues 1–27 (MESGAENQQSGDAAVTEAESQQMTVQA) and 92–111 (SEDSQESVDSVTDSQKRREI). The KID domain occupies 85-144 (QISTIAESEDSQESVDSVTDSQKRREILSRRPSYRKILNDLSSDAPGVPRIEEEKSEEET). Ser-117 carries the post-translational modification Phosphoserine; by CaMK1, CaMK2, CaMK4, PKB/AKT1 or PKB/AKT2, RPS6KA3, RPS6KA4, RPS6KA5 and SGK1. A Glycyl lysine isopeptide (Lys-Gly) (interchain with G-Cter in SUMO2) cross-link involves residue Lys-120. The interval 124-146 (DLSSDAPGVPRIEEEKSEEETSA) is disordered. Position 126 is a phosphoserine; by CaMK2 (Ser-126). Ser-255 bears the Phosphoserine; by HIPK2 mark. Residues 267 to 325 (ARKREVRLMKNREAARECRRKKKEYVKCLENRVAVLENQNKTLIEELKALKDLYCHKSD) form the bZIP domain. Positions 268–293 (RKREVRLMKNREAARECRRKKKEYVK) are basic motif. Residues Lys-269 and Lys-288 each participate in a glycyl lysine isopeptide (Lys-Gly) (interchain with G-Cter in SUMO1) cross-link. The tract at residues 295–316 (LENRVAVLENQNKTLIEELKAL) is leucine-zipper.

It belongs to the bZIP family. Interacts with PPRC1. Binds DNA as a dimer. This dimer is stabilized by magnesium ions. Interacts, through the bZIP domain, with the coactivators CRTC1/TORC1, CRTC2/TORC2 and CRTC3/TORC3. When phosphorylated on Ser-117, binds CREBBP. Interacts with CREBL2; regulates CREB1 phosphorylation, stability and transcriptional activity. Interacts (phosphorylated form) with TOX3. Interacts with ARRB1. Binds to HIPK2. Interacts with SGK1. Interacts with TSSK4; this interaction facilitates phosphorylation on Ser-117. Forms a complex with KMT2A and CREBBP. Interacts with TOX4; CREB1 is required for full induction of TOX4-dependent activity and the interaction is increased by cAMP and inhibited by insulin. Post-translationally, sumoylated with SUMO1. Sumoylation on Lys-288, but not on Lys-269, is required for nuclear localization of this protein. Sumoylation is enhanced under hypoxia, promoting nuclear localization and stabilization. In terms of processing, stimulated by phosphorylation. Phosphorylation of both Ser-117 and Ser-126 in the SCN regulates the activity of CREB and participates in circadian rhythm generation. Phosphorylation of Ser-117 allows CREBBP binding. Phosphorylated upon calcium influx by CaMK4 and CaMK2 on Ser-117. CaMK4 is much more potent than CaMK2 in activating CREB. Phosphorylated by CaMK2 on Ser-126. Phosphorylation of Ser-126 blocks CREB-mediated transcription even when Ser-117 is phosphorylated. Phosphorylated by CaMK1. Phosphorylation of Ser-255 by HIPK2 in response to genotoxic stress promotes CREB1 activity, facilitating the recruitment of the coactivator CBP. Phosphorylated at Ser-117 by RPS6KA3, RPS6KA4 and RPS6KA5 in response to mitogenic or stress stimuli. CREBL2 positively regulates phosphorylation at Ser-117 thereby stimulating CREB1 transcriptional activity. In liver, phosphorylation is induced by fasting or glucagon in a circadian fashion. Phosphorylated by TSSK4 on Ser-117.

The protein localises to the nucleus. Phosphorylation-dependent transcription factor that stimulates transcription upon binding to the DNA cAMP response element (CRE), a sequence present in many viral and cellular promoters. Transcription activation is enhanced by the TORC coactivators which act independently of Ser-117 phosphorylation. Involved in different cellular processes including the synchronization of circadian rhythmicity and the differentiation of adipose cells. Regulates the expression of apoptotic and inflammatory response factors in cardiomyocytes in response to ERFE-mediated activation of AKT signaling. This is Cyclic AMP-responsive element-binding protein 1 (CREB1) from Bos taurus (Bovine).